Reading from the N-terminus, the 69-residue chain is Large ribosomal subunit protein bL31 (69 aa).

This sequence belongs to the bacterial ribosomal protein bL31 family. Type A subfamily. As to quaternary structure, part of the 50S ribosomal subunit.

Its function is as follows. Binds the 23S rRNA. The sequence is that of Large ribosomal subunit protein bL31 from Mycoplasmopsis pulmonis (strain UAB CTIP) (Mycoplasma pulmonis).